The sequence spans 242 residues: Phosphoribosylaminoimidazole-succinocarboxamide synthase (242 aa).

It belongs to the SAICAR synthetase family.

It catalyses the reaction 5-amino-1-(5-phospho-D-ribosyl)imidazole-4-carboxylate + L-aspartate + ATP = (2S)-2-[5-amino-1-(5-phospho-beta-D-ribosyl)imidazole-4-carboxamido]succinate + ADP + phosphate + 2 H(+). It participates in purine metabolism; IMP biosynthesis via de novo pathway; 5-amino-1-(5-phospho-D-ribosyl)imidazole-4-carboxamide from 5-amino-1-(5-phospho-D-ribosyl)imidazole-4-carboxylate: step 1/2. In Prochlorococcus marinus (strain MIT 9303), this protein is Phosphoribosylaminoimidazole-succinocarboxamide synthase.